The sequence spans 164 residues: UPF0478 protein SSP1024 (164 aa).

A helical transmembrane segment spans residues 7–27 (IAGIIAAVAFLILVIGIVVVL). Positions 136-164 (RNRRDSANYKTSSVANETNHSYTTRVDNK) are disordered. Residues 143 to 164 (NYKTSSVANETNHSYTTRVDNK) are compositionally biased toward polar residues.

This sequence belongs to the UPF0478 family.

Its subcellular location is the cell membrane. This is UPF0478 protein SSP1024 from Staphylococcus saprophyticus subsp. saprophyticus (strain ATCC 15305 / DSM 20229 / NCIMB 8711 / NCTC 7292 / S-41).